Here is a 338-residue protein sequence, read N- to C-terminus: Glyceraldehyde-3-phosphate dehydrogenase 2 (338 aa).

Residues 11–12 (RI), aspartate 33, and arginine 78 each bind NAD(+). D-glyceraldehyde 3-phosphate is bound by residues 149 to 151 (SCT), threonine 180, 209 to 210 (TG), and arginine 232. Cysteine 150 functions as the Nucleophile in the catalytic mechanism. NAD(+) is bound at residue asparagine 314.

This sequence belongs to the glyceraldehyde-3-phosphate dehydrogenase family. Homotetramer.

The protein resides in the cytoplasm. It carries out the reaction D-glyceraldehyde 3-phosphate + phosphate + NAD(+) = (2R)-3-phospho-glyceroyl phosphate + NADH + H(+). Its pathway is carbohydrate degradation; glycolysis; pyruvate from D-glyceraldehyde 3-phosphate: step 1/5. This is Glyceraldehyde-3-phosphate dehydrogenase 2 (gpd2) from Agaricus bisporus (White button mushroom).